Reading from the N-terminus, the 405-residue chain is Glucoside xylosyltransferase 1 (405 aa).

At 1–2 the chain is on the cytoplasmic side; that stretch reads MR. Residues 3–23 traverse the membrane as a helical; Signal-anchor for type II membrane protein segment; sequence IYLRTFGLCIVVALLSLVFLF. The Lumenal portion of the chain corresponds to 24-405; sequence SKHDEGSFSA…RLQRATPPGD (382 aa). The interval 46–65 is disordered; it reads SFNGAKAKQRPTATTSHRDV. Residues Asn-202, Asn-243, Asn-277, and Asn-372 are each glycosylated (N-linked (GlcNAc...) asparagine).

It belongs to the glycosyltransferase 8 family.

It is found in the membrane. The catalysed reaction is 3-O-(beta-D-glucosyl)-L-seryl-[EGF-like domain protein] + UDP-alpha-D-xylose = 3-O-[alpha-D-xylosyl-(1-&gt;3)-beta-D-glucosyl]-L-seryl-[EGF-like domain protein] + UDP + H(+). Its function is as follows. Glycosyltransferase which elongates the O-linked glucose attached to EGF-like repeats in the extracellular domain of Notch proteins by catalyzing the addition of xylose. This is Glucoside xylosyltransferase 1 (gxylt1) from Danio rerio (Zebrafish).